The primary structure comprises 73 residues: Disintegrin lutosin (73 aa).

Positions 1-73 (EAGEECDCGS…ADCPRNGLYG (73 aa)) constitute a Disintegrin domain. 6 disulfide bridges follow: Cys6–Cys21, Cys8–Cys16, Cys15–Cys38, Cys29–Cys35, Cys34–Cys59, and Cys47–Cys66. The Cell attachment site motif lies at 51 to 53 (RGD).

It belongs to the venom metalloproteinase (M12B) family. P-II subfamily. P-IIa sub-subfamily. In terms of assembly, monomer (disintegrin). In terms of tissue distribution, expressed by the venom gland.

The protein resides in the secreted. In terms of biological role, inhibits fibrinogen interaction with platelets. Acts by binding to alpha-IIb/beta-3 (ITGA2B/ITGB3) on the platelet surface and inhibits aggregation induced by ADP, thrombin, platelet-activating factor and collagen. The sequence is that of Disintegrin lutosin from Crotalus lutosus (Great basin rattlesnake).